The chain runs to 157 residues: Phosphopantetheine adenylyltransferase (157 aa).

Position 10 (Thr-10) interacts with substrate. Residues 10 to 11 (TF) and His-18 contribute to the ATP site. Residues Lys-42, Leu-74, and Arg-88 each coordinate substrate. ATP is bound by residues 89-91 (GLR), Glu-99, and 124-130 (NAFISSS).

It belongs to the bacterial CoaD family. In terms of assembly, homohexamer. It depends on Mg(2+) as a cofactor.

The protein resides in the cytoplasm. It catalyses the reaction (R)-4'-phosphopantetheine + ATP + H(+) = 3'-dephospho-CoA + diphosphate. It functions in the pathway cofactor biosynthesis; coenzyme A biosynthesis; CoA from (R)-pantothenate: step 4/5. In terms of biological role, reversibly transfers an adenylyl group from ATP to 4'-phosphopantetheine, yielding dephospho-CoA (dPCoA) and pyrophosphate. The sequence is that of Phosphopantetheine adenylyltransferase from Helicobacter pylori (strain Shi470).